Here is a 60-residue protein sequence, read N- to C-terminus: uncharacterized protein (60 aa).

Residues 27–49 (YYWLVSTARMVLGVTILILILIG) traverse the membrane as a helical segment.

It localises to the membrane. This is an uncharacterized protein from Archaeoglobus fulgidus (strain ATCC 49558 / DSM 4304 / JCM 9628 / NBRC 100126 / VC-16).